A 1385-amino-acid chain; its full sequence is Pesticidal crystal protein Cry5Aa (1385 aa).

2 disordered regions span residues 768 to 799 and 1359 to 1385; these read NITVQSNNPPQPSNNGGGDGGGNGGGDGGQYN and PLPTDDQNSEGNTASSTNSDTSMNNNQ. The span at 782-796 shows a compositional bias: gly residues; sequence NGGGDGGGNGGGDGG. Residues 1370–1385 show a composition bias toward low complexity; sequence NTASSTNSDTSMNNNQ.

It belongs to the delta endotoxin family.

In terms of biological role, endotoxin with nematicidal activity. This chain is Pesticidal crystal protein Cry5Aa (cry5Aa), found in Bacillus thuringiensis subsp. darmstadiensis.